The chain runs to 196 residues: Phosphoheptose isomerase (196 aa).

In terms of domain architecture, SIS spans 36-196 (MAQALQAEGK…LIDQHLFGGA (161 aa)). 51–53 (NGG) is a substrate binding site. Zn(2+) is bound by residues His60 and Glu64. Substrate contacts are provided by residues Glu64, 93 to 94 (ND), 119 to 121 (STS), Ser124, and Gln174. 2 residues coordinate Zn(2+): Gln174 and His182.

This sequence belongs to the SIS family. GmhA subfamily. Homotetramer. It depends on Zn(2+) as a cofactor.

The protein resides in the cytoplasm. The enzyme catalyses 2 D-sedoheptulose 7-phosphate = D-glycero-alpha-D-manno-heptose 7-phosphate + D-glycero-beta-D-manno-heptose 7-phosphate. The protein operates within carbohydrate biosynthesis; D-glycero-D-manno-heptose 7-phosphate biosynthesis; D-glycero-alpha-D-manno-heptose 7-phosphate and D-glycero-beta-D-manno-heptose 7-phosphate from sedoheptulose 7-phosphate: step 1/1. Catalyzes the isomerization of sedoheptulose 7-phosphate in D-glycero-D-manno-heptose 7-phosphate. This chain is Phosphoheptose isomerase, found in Alkalilimnicola ehrlichii (strain ATCC BAA-1101 / DSM 17681 / MLHE-1).